Reading from the N-terminus, the 239-residue chain is Pentatricopeptide repeat-containing protein DWY1, chloroplastic (239 aa).

A chloroplast-targeting transit peptide spans 1 to 35 (MALEAAFSMSFCSFSVPKAIFCERETSSFQRITSR). Disordered regions lie at residues 40 to 59 (AGES…KETS) and 101 to 122 (HISP…SGGE). Basic and acidic residues predominate over residues 111 to 122 (VRGDKPEISGGE). Positions 113 to 144 (GDKPEISGGEKKAIVDRSKAYVKLKSLGKEVR) are type E(+) motif. Residues 145 to 239 (DAGYVPETKY…DGNCSCGDYW (95 aa)) form a type DYW motif region.

It belongs to the PPR family. PCMP-H subfamily. Interacts with CRR4. It depends on Zn(2+) as a cofactor.

It localises to the plastid. It is found in the chloroplast. In terms of biological role, plays a major role in single RNA editing events in chloroplasts. Acts as a site-recognition transacting factor involved in the edition of the site 1 of ndhD (ndhD-1 site corresponding to cytidine-2), which is a plastid-encoded subunit of the NADH-plastoquinone oxidoreductase. The interaction with CRR4 is required for its function in editing the ndhD-1 site. This Arabidopsis thaliana (Mouse-ear cress) protein is Pentatricopeptide repeat-containing protein DWY1, chloroplastic.